Reading from the N-terminus, the 509-residue chain is Zinc finger protein Aiolos (509 aa).

Residues 1–19 (MEDIQTNAELKSTQEQSVP) show a composition bias toward polar residues. The segment at 1–86 (MEDIQTNAEL…MGNAEEPEIP (86 aa)) is disordered. Phosphoserine occurs at positions 22 and 42. A compositionally biased stretch (basic and acidic residues) spans 56-72 (DSMKVKDEYSERDENVL). Glycyl lysine isopeptide (Lys-Gly) (interchain with G-Cter in SUMO2) cross-links involve residues Lys61, Lys73, and Lys100. C2H2-type zinc fingers lie at residues 118-140 (MNCDVCGLSCISFNVLMVHKRSH), 146-168 (FQCNQCGASFTQKGNLLRHIKLH), and 174-196 (FKCHLCNYACQRRDALTGHLRTH). The C2H2-type 4; atypical zinc-finger motif lies at 202 to 224 (YKCEFCGRSYKQRSSLEEHKERC). A Glycyl lysine isopeptide (Lys-Gly) (interchain with G-Cter in SUMO2) cross-link involves residue Lys245. A Phosphothreonine modification is found at Thr326. Residues 364–394 (IHLPEKSVPSERGLSPNNSGHDSTDTDSNHE) are disordered. The residue at position 378 (Ser378) is a Phosphoserine. Basic and acidic residues predominate over residues 385–394 (DSTDTDSNHE). The C2H2-type 5 zinc-finger motif lies at 452-474 (YRCDHCRVLFLDYVMFTIHMGCH). Positions 452-504 (YRCDHCRVLFLDYVMFTIHMGCHGFRDPFECNMCGYRSHDRYEFSSHIARGEH) are mediates homodimerization and heterodimerization. The C2H2-type 6; atypical zinc-finger motif lies at 480–504 (FECNMCGYRSHDRYEFSSHIARGEH).

It belongs to the Ikaros C2H2-type zinc-finger protein family. In terms of assembly, homodimer. Heterodimer with other IKAROS family members. Interacts with IKZF4 and IKZF5. Interacts with IKZF1. Interacts with HRAS. Interacts with FOXP3; this interaction may be required for silencing target genes and regulating the suppressive activity of FOXP3-positive regulatory T-cells (Treg). Interacts with BCL21L isoform Bcl-X(L); this interaction blocks the anti-apoptotic role of BCL21L. Associates with histone deacetylase complexes containing HDAC1, MTA2 and SIN3A. Phosphorylation on tyrosine residues induced by IL2 is required for dissociation from HRAS and nuclear translocation of IKZF3 in T-cells. Phosphorylation on tyrosine residues induced by IL4 is required for dissociation from Bcl-X(L) in T-cells. Expressed most strongly in peripheral blood leukocytes, the spleen, and the thymus.

Its subcellular location is the nucleus. It is found in the cytoplasm. Transcription factor that plays an important role in the regulation of lymphocyte differentiation. Plays an essential role in regulation of B-cell differentiation, proliferation and maturation to an effector state. Involved in regulating BCL2 expression and controlling apoptosis in T-cells in an IL2-dependent manner. The polypeptide is Zinc finger protein Aiolos (IKZF3) (Homo sapiens (Human)).